Consider the following 465-residue polypeptide: Probable multidrug resistance protein NorM (465 aa).

The next 10 helical transmembrane spans lie at 50–72 (MAAI…GLLL), 92–114 (HQVR…LIYH), 127–149 (HLAQ…YLLL), 164–186 (PAMI…FIYG), 193–215 (FGAV…LMIS), 248–270 (GLPI…LLLS), 283–305 (ALNT…TILV), 320–342 (ISYV…TVVL), 393–412 (ILYI…GYIL), and 422–444 (MGPT…LLFY).

Belongs to the multi antimicrobial extrusion (MATE) (TC 2.A.66.1) family.

It localises to the cell inner membrane. Its function is as follows. Multidrug efflux pump. This chain is Probable multidrug resistance protein NorM (norM), found in Mannheimia succiniciproducens (strain KCTC 0769BP / MBEL55E).